Reading from the N-terminus, the 162-residue chain is Phosphopantetheine adenylyltransferase (162 aa).

Substrate is bound at residue S11. ATP contacts are provided by residues 11-12 and H19; that span reads SF. Residues K43, V76, and R90 each coordinate substrate. Residues 91–93, E101, and 126–132 each bind ATP; these read GLR and HLYISSS.

Belongs to the bacterial CoaD family. As to quaternary structure, homohexamer. Mg(2+) is required as a cofactor.

The protein resides in the cytoplasm. It catalyses the reaction (R)-4'-phosphopantetheine + ATP + H(+) = 3'-dephospho-CoA + diphosphate. Its pathway is cofactor biosynthesis; coenzyme A biosynthesis; CoA from (R)-pantothenate: step 4/5. Functionally, reversibly transfers an adenylyl group from ATP to 4'-phosphopantetheine, yielding dephospho-CoA (dPCoA) and pyrophosphate. In Streptococcus pneumoniae (strain Hungary19A-6), this protein is Phosphopantetheine adenylyltransferase.